A 204-amino-acid polypeptide reads, in one-letter code: ATP phosphoribosyltransferase (204 aa).

The protein belongs to the ATP phosphoribosyltransferase family. Short subfamily. Heteromultimer composed of HisG and HisZ subunits.

It localises to the cytoplasm. The enzyme catalyses 1-(5-phospho-beta-D-ribosyl)-ATP + diphosphate = 5-phospho-alpha-D-ribose 1-diphosphate + ATP. Its pathway is amino-acid biosynthesis; L-histidine biosynthesis; L-histidine from 5-phospho-alpha-D-ribose 1-diphosphate: step 1/9. Functionally, catalyzes the condensation of ATP and 5-phosphoribose 1-diphosphate to form N'-(5'-phosphoribosyl)-ATP (PR-ATP). Has a crucial role in the pathway because the rate of histidine biosynthesis seems to be controlled primarily by regulation of HisG enzymatic activity. The sequence is that of ATP phosphoribosyltransferase from Staphylococcus epidermidis (strain ATCC 35984 / DSM 28319 / BCRC 17069 / CCUG 31568 / BM 3577 / RP62A).